The sequence spans 87 residues: UPF0367 protein Syncc9902_0316 (87 aa).

The protein belongs to the UPF0367 family.

This chain is UPF0367 protein Syncc9902_0316, found in Synechococcus sp. (strain CC9902).